The primary structure comprises 539 residues: Propionyl-CoA carboxylase beta chain, mitochondrial (539 aa).

A mitochondrion-targeting transit peptide spans 1 to 28 (MAAALRVAAVGARLSVLASGLRAAVRSL). Residues 32–290 (ATSVNERIEN…SSQDPAPVRE (259 aa)) enclose the CoA carboxyltransferase N-terminal domain. Positions 32 to 533 (ATSVNERIEN…SKKVQRPWRK (502 aa)) are carboxyltransferase. Ser-71 is subject to Phosphoserine. At Lys-99 the chain carries N6-acetyllysine; alternate. Lys-99 carries the N6-succinyllysine; alternate modification. Lys-248 carries the post-translational modification N6-succinyllysine. Residues 294 to 533 (PSDRLVPELD…SKKVQRPWRK (240 aa)) enclose the CoA carboxyltransferase C-terminal domain. Residues 325-358 (DEREFFEIMPNYAKNIIVGFARMNGRTVGIVGNQ) are acyl-CoA binding. Lys-474 and Lys-489 each carry N6-acetyllysine; alternate. N6-succinyllysine; alternate occurs at positions 474 and 489.

The protein belongs to the AccD/PCCB family. The holoenzyme is a dodecamer composed of 6 PCCA/alpha subunits and 6 PCCB/beta subunits.

The protein localises to the mitochondrion matrix. The catalysed reaction is propanoyl-CoA + hydrogencarbonate + ATP = (S)-methylmalonyl-CoA + ADP + phosphate + H(+). It carries out the reaction butanoyl-CoA + hydrogencarbonate + ATP = (2S)-ethylmalonyl-CoA + ADP + phosphate + H(+). It functions in the pathway metabolic intermediate metabolism; propanoyl-CoA degradation; succinyl-CoA from propanoyl-CoA: step 1/3. This is one of the 2 subunits of the biotin-dependent propionyl-CoA carboxylase (PCC), a mitochondrial enzyme involved in the catabolism of odd chain fatty acids, branched-chain amino acids isoleucine, threonine, methionine, and valine and other metabolites. Propionyl-CoA carboxylase catalyzes the carboxylation of propionyl-CoA/propanoyl-CoA to D-methylmalonyl-CoA/(S)-methylmalonyl-CoA. Within the holoenzyme, the alpha subunit catalyzes the ATP-dependent carboxylation of the biotin carried by the biotin carboxyl carrier (BCC) domain, while the beta subunit then transfers the carboxyl group from carboxylated biotin to propionyl-CoA. Propionyl-CoA carboxylase also significantly acts on butyryl-CoA/butanoyl-CoA, which is converted to ethylmalonyl-CoA/(2S)-ethylmalonyl-CoA at a much lower rate. Other alternative minor substrates include (2E)-butenoyl-CoA/crotonoyl-CoA. The polypeptide is Propionyl-CoA carboxylase beta chain, mitochondrial (Homo sapiens (Human)).